The chain runs to 517 residues: MKHKLQMMKMRWLSAAVMLTLYTSSSWAFSIDDVAKQAQSLAGKGYEAPKSNLPSVFRDMKYADYQQIQFNHDKAYWNNLKTPFKLEFYHQGMYFDTPVKINEVTATAVKRIKYSPDYFTFGDVQHDKDTVKDLGFAGFKVLYPINSKDKNDEIVSMLGASYFRVIGAGQVYGLSARGLAIDTALPSGEEFPRFKEFWIERPKPTDKRLTIYALLDSPRATGAYKFVVMPGRDTVVDVQSKIYLRDKVGKLGVAPLTSMFLFGPNQPSPANNYRPELHDSNGLSIHAGNGEWIWRPLNNPKHLAVSSFSMENPQGFGLLQRGRDFSRFEDLDDRYDLRPSAWVTPKGEWGKGSVELVEIPTNDETNDNIVAYWTPDQLPEPGKEMNFKYTITFSRDEDKLHAPDNAWVQQTRRSTGDVKQSNLIRQPDGTIAFVVDFTGAEMKKLPEDTPVTAQTSIGDNGEIVESTVRYNPVTKGWRLVMRVKVKDAKKTTEMRAALVNADQTLSETWSYQLPANE.

A signal peptide spans 1–28 (MKHKLQMMKMRWLSAAVMLTLYTSSSWA).

Belongs to the OpgD/OpgG family.

Its subcellular location is the periplasm. It functions in the pathway glycan metabolism; osmoregulated periplasmic glucan (OPG) biosynthesis. Involved in the biosynthesis of osmoregulated periplasmic glucans (OPGs). In Escherichia coli O1:K1 / APEC, this protein is Glucans biosynthesis protein G.